Here is a 1642-residue protein sequence, read N- to C-terminus: Cholesterol transporter ABCA5 (1642 aa).

The chain crosses the membrane as a helical span at residues 32 to 52 (SVQEILFPLFFLFWLILISMM). N-linked (GlcNAc...) asparagine glycosylation is found at asparagine 86 and asparagine 190. 6 helical membrane-spanning segments follow: residues 220-240 (VILIYLVIAFSPFGYFLAIHI), 264-284 (LSWVLLYTSLIFLMSLLMAVI), 297-317 (IVIFLLFFLYGLSSVFFALML), 327-347 (VGVVEFFVTVVFGFVGLLIVL), 355-375 (LVWLFSPLCQCAFLIGIAQVM), and 396-416 (LIITLTMLALDSVFYALLAVY). Asparagine 458 carries N-linked (GlcNAc...) asparagine glycosylation. The ABC transporter 1 domain maps to 478-713 (IRISGIQKAY…WGIGYRLSMY (236 aa)). 514 to 521 (GHSGTGKS) is an ATP binding site. A helical transmembrane segment spans residues 866–886 (LLLLLIFFAVQIFMFLVHHSF). Asparagine 919 is a glycosylation site (N-linked (GlcNAc...) asparagine). A helical membrane pass occupies residues 967–987 (VFTAVFNSTMVYSLPVMMNII). N-linked (GlcNAc...) asparagine glycosylation occurs at asparagine 996. The next 6 helical transmembrane spans lie at 1021–1041 (LYFQAALLGIIVTAMPPYFAM), 1071–1091 (VVDIPLFFVVLTLMLGSLFAF), 1102–1122 (FLAVVFCLIAYVPSVILFTYI), 1139–1159 (FIYSVTALACVAVTEITFFLG), 1164–1184 (AVFHYTFCIAIPIYPLLGCLI), and 1207–1227 (LLVAVIMPYLQCVLWIFLLQH). The region spanning 1290–1533 (IMVYNLHKEY…FGKGYFLEIK (244 aa)) is the ABC transporter 2 domain. 1333–1340 (GPNGAGKS) is an ATP binding site.

Belongs to the ABC transporter superfamily. ABCA family. N-glycosylated. Expressed in testis, epididymis, lung and brain.

Its subcellular location is the lysosome membrane. The protein resides in the late endosome membrane. The protein localises to the golgi apparatus membrane. It is found in the cell membrane. The catalysed reaction is cholesterol(in) + ATP + H2O = cholesterol(out) + ADP + phosphate + H(+). In terms of biological role, cholesterol efflux transporter in macrophages that is responsible for APOAI/high-density lipoproteins (HDL) formation at the plasma membrane under high cholesterol levels and participates in reverse cholesterol transport. May play a role in the processing of autolysosomes. This chain is Cholesterol transporter ABCA5, found in Rattus norvegicus (Rat).